The primary structure comprises 276 residues: 2,3,4,5-tetrahydropyridine-2,6-dicarboxylate N-succinyltransferase (276 aa).

Substrate-binding residues include Arg-104 and Asp-141.

This sequence belongs to the transferase hexapeptide repeat family. In terms of assembly, homotrimer.

It is found in the cytoplasm. It carries out the reaction (S)-2,3,4,5-tetrahydrodipicolinate + succinyl-CoA + H2O = (S)-2-succinylamino-6-oxoheptanedioate + CoA. The protein operates within amino-acid biosynthesis; L-lysine biosynthesis via DAP pathway; LL-2,6-diaminopimelate from (S)-tetrahydrodipicolinate (succinylase route): step 1/3. This Legionella pneumophila (strain Corby) protein is 2,3,4,5-tetrahydropyridine-2,6-dicarboxylate N-succinyltransferase.